The primary structure comprises 54 residues: Protein PIGBOS1 (54 aa).

Over 1 to 4 (MFRR) the chain is Mitochondrial intermembrane. Residues 5 to 25 (LTFAQLLFATVLGIAGGVYIF) form a helical membrane-spanning segment. Topologically, residues 26 to 54 (QPVFEQYAKDQKELKEKMQLVQESEEKKS) are cytoplasmic. Residues 30-36 (EQYAKDQ) are required for interaction with CLCC1.

Homooligomer. Interacts (via C-terminus) with endoplasmic reticulum (ER) protein CLCC1; the interaction occurs at the mitochondria-associated ER membrane, a zone of contact between the ER and mitochondrial membranes, but does not appear to play a role in ER-mitochondria tethering and is not affected by ER stress.

It localises to the mitochondrion outer membrane. In terms of biological role, plays a role in regulation of the unfolded protein response triggered by endoplasmic reticulum (ER) stress resulting from the presence of unfolded proteins in the ER lumen. The polypeptide is Protein PIGBOS1 (Homo sapiens (Human)).